The sequence spans 115 residues: uncharacterized protein (115 aa).

This is an uncharacterized protein from Acidianus filamentous virus 1 (isolate United States/Yellowstone) (AFV-1).